The following is a 191-amino-acid chain: Ribonuclease HII (191 aa).

One can recognise an RNase H type-2 domain in the interval 16-191 (INLIGIDEAG…KLHRKSFKLL (176 aa)). The a divalent metal cation site is built by Asp22, Glu23, and Asp110.

Belongs to the RNase HII family. It depends on Mn(2+) as a cofactor. Mg(2+) serves as cofactor.

It is found in the cytoplasm. It carries out the reaction Endonucleolytic cleavage to 5'-phosphomonoester.. Functionally, endonuclease that specifically degrades the RNA of RNA-DNA hybrids. In Campylobacter jejuni subsp. jejuni serotype O:6 (strain 81116 / NCTC 11828), this protein is Ribonuclease HII.